The following is an 83-amino-acid chain: Alpha-conotoxin QcIA (83 aa).

Positions 1-21 (MGMRMMFTLFLLAVLSTTVVS) are cleaved as a signal peptide. The propeptide occupies 22 to 48 (FTLDRASNGRDAAADSKAADQIAQTVR). Cystine bridges form between C51–C57 and C52–C65. A ser-Xaa-Pro motif, crucial for potent interaction with nAChR region spans residues 53-55 (SNP). Positions 66–83 (RRTLMLQNPLNHDMSPSA) are excised as a propeptide.

Belongs to the conotoxin A superfamily. In terms of tissue distribution, expressed by the venom duct.

It localises to the secreted. Alpha-conotoxins bind to the nicotinic acetylcholine receptors (nAChR) and inhibit them. A synthetic amidated version of this toxin potently and preferentially antagonizes neuronal rat alpha-3-beta-2 (IC(50)=55.7 nM) and alpha-6/alpha-3-beta-4 (IC(50)=90.69 nM) nAChRs. This is Alpha-conotoxin QcIA from Conus quercinus (Oak cone).